A 338-amino-acid polypeptide reads, in one-letter code: Tryptophan--tRNA ligase (338 aa).

ATP is bound by residues 11–13 (QPS) and 19–20 (GN). A 'HIGH' region motif is present at residues 12–20 (PSGELSIGN). Aspartate 135 serves as a coordination point for L-tryptophan. Residues 147–149 (GSD), valine 189, and 198–202 (KMSKS) contribute to the ATP site. The short motif at 198 to 202 (KMSKS) is the 'KMSKS' region element.

The protein belongs to the class-I aminoacyl-tRNA synthetase family. As to quaternary structure, homodimer.

Its subcellular location is the cytoplasm. The enzyme catalyses tRNA(Trp) + L-tryptophan + ATP = L-tryptophyl-tRNA(Trp) + AMP + diphosphate + H(+). Catalyzes the attachment of tryptophan to tRNA(Trp). The polypeptide is Tryptophan--tRNA ligase (Vibrio vulnificus (strain YJ016)).